Reading from the N-terminus, the 600-residue chain is KIF-binding protein (600 aa).

Residues 384–434 (KAENEATEYSKIMQDYAEAYEHIAFFEENPENQAKMQKRRAKYLEDLLDLL) are a coiled coil.

It belongs to the KIF-binding protein family.

The protein resides in the cytoplasm. The protein localises to the cytoskeleton. This chain is KIF-binding protein, found in Drosophila melanogaster (Fruit fly).